Consider the following 394-residue polypeptide: Alcohol dehydrogenase-like 3 (394 aa).

The Zn(2+) site is built by cysteine 48, threonine 50, histidine 71, cysteine 101, cysteine 104, cysteine 107, cysteine 115, and cysteine 188. An alcohol-binding residues include threonine 50 and histidine 71. Position 50 (threonine 50) interacts with NAD(+). Residues 213 to 218 (GLGSVG), aspartate 237, lysine 242, threonine 283, valine 306, 306 to 308 (VGI), phenylalanine 333, and arginine 383 contribute to the NAD(+) site.

This sequence belongs to the zinc-containing alcohol dehydrogenase family. Class-III subfamily. As to quaternary structure, homodimer. Zn(2+) serves as cofactor.

The protein localises to the cytoplasm. It carries out the reaction a primary alcohol + NAD(+) = an aldehyde + NADH + H(+). The catalysed reaction is a secondary alcohol + NAD(+) = a ketone + NADH + H(+). The sequence is that of Alcohol dehydrogenase-like 3 from Arabidopsis thaliana (Mouse-ear cress).